The chain runs to 158 residues: 6,7-dimethyl-8-ribityllumazine synthase (158 aa).

Residues Phe22, 57–59 (AYE), and 84–86 (TVI) contribute to the 5-amino-6-(D-ribitylamino)uracil site. 89-90 (GT) is a binding site for (2S)-2-hydroxy-3-oxobutyl phosphate. His92 serves as the catalytic Proton donor. A 5-amino-6-(D-ribitylamino)uracil-binding site is contributed by Phe117. Arg131 is a (2S)-2-hydroxy-3-oxobutyl phosphate binding site.

Belongs to the DMRL synthase family. Forms an icosahedral capsid composed of 60 subunits, arranged as a dodecamer of pentamers.

The enzyme catalyses (2S)-2-hydroxy-3-oxobutyl phosphate + 5-amino-6-(D-ribitylamino)uracil = 6,7-dimethyl-8-(1-D-ribityl)lumazine + phosphate + 2 H2O + H(+). It participates in cofactor biosynthesis; riboflavin biosynthesis; riboflavin from 2-hydroxy-3-oxobutyl phosphate and 5-amino-6-(D-ribitylamino)uracil: step 1/2. Catalyzes the formation of 6,7-dimethyl-8-ribityllumazine by condensation of 5-amino-6-(D-ribitylamino)uracil with 3,4-dihydroxy-2-butanone 4-phosphate. This is the penultimate step in the biosynthesis of riboflavin. This chain is 6,7-dimethyl-8-ribityllumazine synthase, found in Pectobacterium carotovorum subsp. carotovorum (strain PC1).